Reading from the N-terminus, the 176-residue chain is ATP-dependent protease subunit HslV (176 aa).

Residue T4 is part of the active site. Positions 159, 162, and 165 each coordinate Na(+).

It belongs to the peptidase T1B family. HslV subfamily. A double ring-shaped homohexamer of HslV is capped on each side by a ring-shaped HslU homohexamer. The assembly of the HslU/HslV complex is dependent on binding of ATP.

The protein resides in the cytoplasm. It carries out the reaction ATP-dependent cleavage of peptide bonds with broad specificity.. Allosterically activated by HslU binding. Its function is as follows. Protease subunit of a proteasome-like degradation complex believed to be a general protein degrading machinery. The polypeptide is ATP-dependent protease subunit HslV (Wolbachia sp. subsp. Brugia malayi (strain TRS)).